The sequence spans 373 residues: Queuine tRNA-ribosyltransferase accessory subunit 2 (373 aa).

Zn(2+) contacts are provided by Cys320, Cys322, Cys325, and His351.

Belongs to the queuine tRNA-ribosyltransferase family. QTRT2 subfamily. Heterodimer of a catalytic subunit and an accessory subunit. The cofactor is Zn(2+).

It localises to the cytoplasm. Non-catalytic subunit of the queuine tRNA-ribosyltransferase (TGT) that catalyzes the base-exchange of a guanine (G) residue with queuine (Q) at position 34 (anticodon wobble position) in tRNAs with GU(N) anticodons (tRNA-Asp, -Asn, -His and -Tyr), resulting in the hypermodified nucleoside queuosine (7-(((4,5-cis-dihydroxy-2-cyclopenten-1-yl)amino)methyl)-7-deazaguanosine). The sequence is that of Queuine tRNA-ribosyltransferase accessory subunit 2 from Caenorhabditis elegans.